Here is a 366-residue protein sequence, read N- to C-terminus: Neuropeptide Y receptor type 1 (366 aa).

The Extracellular segment spans residues 1–39 (MNFSTYFENLSVPNNISGNITFPISEDCALPLPMIFTLA). N-linked (GlcNAc...) asparagine glycosylation is found at Asn-2, Asn-9, and Asn-15. Residues 40–60 (LAYGAVIILGLSGNLALIIII) form a helical membrane-spanning segment. The Cytoplasmic segment spans residues 61-82 (LKQKEMRNVTNILIVNLSFSDL). The helical transmembrane segment at 83-103 (LATIMCLPFTLIYTLMDHWIF) threads the bilayer. Residues 104–111 (GEVMCKLN) lie on the Extracellular side of the membrane. Cys-108 and Cys-193 form a disulfide bridge. Residues 112-132 (EYIQCVSVTVSIFSLVLIAIE) form a helical membrane-spanning segment. Over 133–149 (RHQLIINPRGWRPNNRH) the chain is Cytoplasmic. The helical transmembrane segment at 150 to 170 (ACFGITVIWGFAMACSTPLMM) threads the bilayer. Topologically, residues 171 to 203 (YSVLTDEPFKNISLDSYIGKYVCLEDFPEDKFR) are extracellular. An N-linked (GlcNAc...) asparagine glycan is attached at Asn-181. The helical transmembrane segment at 204–224 (LSYTTLLFILQYLGPLCFIFV) threads the bilayer. Topologically, residues 225-260 (CYTKIFLRLKRRNNMMDKIRDNKYRSSETKRINIML) are cytoplasmic. Residues 261–281 (LSIVVGFALCWLPFFIFNLVF) form a helical membrane-spanning segment. At 282–294 (DWNHEAVATCNHN) the chain is on the extracellular side. Residues 295 to 315 (LLFLICHLTAMISTCVNPIFY) traverse the membrane as a helical segment. Over 316 to 366 (GFLNKNFQRDLQFFFNFCDFRSREDDYETIAMSTMHTDVSKTSLKQASPIA) the chain is Cytoplasmic. Cys-333 is lipidated: S-palmitoyl cysteine.

This sequence belongs to the G-protein coupled receptor 1 family.

The protein resides in the cell membrane. Receptor for neuropeptide Y and peptide YY. The sequence is that of Neuropeptide Y receptor type 1 (npy1r) from Xenopus laevis (African clawed frog).